The primary structure comprises 152 residues: UPF0178 protein YPTS_2857 (152 aa).

This sequence belongs to the UPF0178 family.

This chain is UPF0178 protein YPTS_2857, found in Yersinia pseudotuberculosis serotype IB (strain PB1/+).